The sequence spans 931 residues: Adhesion G protein-coupled receptor E1 (931 aa).

Residues 1 to 27 (MWGFWLLLFWGFSGMYRWGMTTLPTLG) form the signal peptide. The Extracellular portion of the chain corresponds to 28-644 (QTLGGVNECQ…IMASGELTME (617 aa)). EGF-like domains are found at residues 32–80 (GVNE…VECQ) and 81–132 (DVNE…FLCA). Disulfide bonds link Cys-36/Cys-48, Cys-42/Cys-57, Cys-59/Cys-79, Cys-85/Cys-98, Cys-92/Cys-107, Cys-109/Cys-131, Cys-137/Cys-149, Cys-143/Cys-158, Cys-160/Cys-171, Cys-177/Cys-189, Cys-183/Cys-198, Cys-200/Cys-220, Cys-226/Cys-239, Cys-233/Cys-248, Cys-250/Cys-270, Cys-276/Cys-286, Cys-280/Cys-295, Cys-297/Cys-317, Cys-323/Cys-336, Cys-330/Cys-345, and Cys-347/Cys-366. The EGF-like 3; calcium-binding domain maps to 133-172 (DVDECLTIGICPKYSNCSNSVGSYSCTCQPGFVLNGSICE). N-linked (GlcNAc...) asparagine glycosylation is found at Asn-148 and Asn-167. An EGF-like 4; calcium-binding domain is found at 173 to 221 (DEDECVTRDVCPEHATCHNTLGSYYCTCNSGLESSGGGPMFQGLDESCE). Residues 222-271 (DVDECSRNSTLCGPTFICINTLGSYSCSCPAGFSLPTFQILGHPADGNCT) form the EGF-like 5; calcium-binding domain. Residue Asn-229 is glycosylated (N-linked (GlcNAc...) asparagine). Asn-269 and Asn-283 each carry an N-linked (GlcNAc...) asparagine glycan. Positions 272 to 318 (DIDECDDTCPLNSSCTNTIGSYFCTCHPGFASSNGQLNFKDLEVTCE) constitute an EGF-like 6; calcium-binding domain. The EGF-like 7; calcium-binding domain maps to 319–367 (DIDECTQDPLQCGLNSVCTNVPGSYICGCLPDFQMDPEGSQGYGNFNCK). Asn-405, Asn-417, Asn-474, and Asn-498 each carry an N-linked (GlcNAc...) asparagine glycan. The region spanning 482 to 642 (EYLDIESKVI…AIIMASGELT (161 aa)) is the GAIN-B domain. A Cell attachment site motif is present at residues 506 to 508 (RGD). 2 cysteine pairs are disulfide-bonded: Cys-595/Cys-624 and Cys-612/Cys-626. A GPS region spans residues 595 to 642 (CVSWNTDVEDGRWTPSGCEIVEASETHTVCSCNRMANLAIIMASGELT). Residues 645–672 (FSLYIISHVGTVISLVCLALAIATFLLC) form a helical membrane-spanning segment. At 673-679 (RAVQNHN) the chain is on the cytoplasmic side. The chain crosses the membrane as a helical span at residues 680–701 (TYMHLHLCVCLFLAKILFLTGI). The Extracellular portion of the chain corresponds to 702–711 (DKTDNQTACA). The N-linked (GlcNAc...) asparagine glycan is linked to Asn-706. A helical membrane pass occupies residues 712-735 (IIAGFLHYLFLACFFWMLVEAVML). The Cytoplasmic segment spans residues 736–754 (FLMVRNLKVVNYFSSRNIK). Residues 755–776 (MLHLCAFGYGLPVLVVIISASV) form a helical membrane-spanning segment. The Extracellular segment spans residues 777–792 (QPRGYGMHNRCWLNTE). Residues 793 to 821 (TGFIWSFLGPVCMIITINSVLLAWTLWVL) form a helical membrane-spanning segment. At 822–839 (RQKLCSVSSEVSKLKDTR) the chain is on the cytoplasmic side. The chain crosses the membrane as a helical span at residues 840–859 (LLTFKAIAQIFILGCSWVLG). Topologically, residues 860 to 874 (IFQIGPLASIMAYLF) are extracellular. The helical transmembrane segment at 875–897 (TIINSLQGAFIFLIHCLLNRQVR) threads the bilayer. Residues 898-931 (DEYKKLLTRKTDLSSHSQTSGILLSSMPSTSKMG) lie on the Cytoplasmic side of the membrane.

Belongs to the G-protein coupled receptor 2 family. Adhesion G-protein coupled receptor (ADGR) subfamily. In macrophages; but absent from those which are localized within T-cell areas of lymph nodes and spleen. Low level of expression on blood monocytes.

The protein localises to the cell membrane. Functionally, orphan receptor involved in cell adhesion and probably in cell-cell interactions specifically involving cells of the immune system. May play a role in regulatory T-cells (Treg) development. This chain is Adhesion G protein-coupled receptor E1 (Adgre1), found in Mus musculus (Mouse).